Here is a 399-residue protein sequence, read N- to C-terminus: Telomeric repeat-binding factor 2-interacting protein 1 (399 aa).

A2 bears the N-acetylalanine mark. Phosphoserine occurs at positions 36 and 43. In terms of domain architecture, BRCT spans 78-101 (FISTQYILDCVERNERLELEAYRL). Residues 104–132 (ASAADTGSEAKPGALAEGAAEPEPQRHAG) form a disordered region. A compositionally biased stretch (low complexity) spans 112 to 125 (EAKPGALAEGAAEP). K114 is covalently cross-linked (Glycyl lysine isopeptide (Lys-Gly) (interchain with G-Cter in SUMO2)). The Myb-like domain maps to 128 to 188 (QRHAGRIAFT…SLKDRYLKHL (61 aa)). Residues S154 and S156 each carry the phosphoserine modification. A Glycyl lysine isopeptide (Lys-Gly) (interchain with G-Cter in SUMO2) cross-link involves residue K194. Disordered stretches follow at residues 196–244 (LLGD…EEIQ) and 264–311 (VVVD…QPEV). Phosphoserine is present on residues S203 and S206. Glycyl lysine isopeptide (Lys-Gly) (interchain with G-Cter in SUMO2) cross-links involve residues K208, K212, and K240. Positions 280 to 304 (CDDDPPTPEEDSETQPDEEEEEEEE) are enriched in acidic residues. Residue K372 forms a Glycyl lysine isopeptide (Lys-Gly) (interchain with G-Cter in SUMO2) linkage. The Nuclear localization signal motif lies at 383–399 (KKFGAQNVARRIEFRKK).

Belongs to the RAP1 family. As to quaternary structure, associates with the I-kappa-B-kinase (IKK) core complex, composed of CHUK, IKBKB and IKBKG. Homodimer. Component of the shelterin complex (telosome) composed of TERF1, TERF2, TINF2, TERF2IP ACD and POT1. Interacts with TERF2; the interaction is direct. Does not interact with TERF1. Interacts with SLX4/BTBD12. In terms of tissue distribution, ubiquitous. Highly expressed.

Its subcellular location is the nucleus. It localises to the cytoplasm. It is found in the chromosome. The protein resides in the telomere. Functionally, acts both as a regulator of telomere function and as a transcription regulator. Involved in the regulation of telomere length and protection as a component of the shelterin complex (telosome). In contrast to other components of the shelterin complex, it is dispensible for telomere capping and does not participate in the protection of telomeres against non-homologous end-joining (NHEJ)-mediated repair. Instead, it is required to negatively regulate telomere recombination and is essential for repressing homology-directed repair (HDR), which can affect telomere length. Does not bind DNA directly: recruited to telomeric double-stranded 5'-TTAGGG-3' repeats via its interaction with TERF2. Independently of its function in telomeres, also acts as a transcription regulator: recruited to extratelomeric 5'-TTAGGG-3' sites via its association with TERF2 or other factors, and regulates gene expression. When cytoplasmic, associates with the I-kappa-B-kinase (IKK) complex and acts as a regulator of the NF-kappa-B signaling by promoting IKK-mediated phosphorylation of RELA/p65, leading to activate expression of NF-kappa-B target genes. The polypeptide is Telomeric repeat-binding factor 2-interacting protein 1 (TERF2IP) (Homo sapiens (Human)).